Consider the following 427-residue polypeptide: Serine--tRNA ligase (427 aa).

232 to 234 (TAE) lines the L-serine pocket. Residue 263–265 (RSE) coordinates ATP. Glu286 is an L-serine binding site. 350–353 (EISS) contributes to the ATP binding site. Ser385 is a binding site for L-serine.

It belongs to the class-II aminoacyl-tRNA synthetase family. Type-1 seryl-tRNA synthetase subfamily. Homodimer. The tRNA molecule binds across the dimer.

The protein localises to the cytoplasm. It carries out the reaction tRNA(Ser) + L-serine + ATP = L-seryl-tRNA(Ser) + AMP + diphosphate + H(+). It catalyses the reaction tRNA(Sec) + L-serine + ATP = L-seryl-tRNA(Sec) + AMP + diphosphate + H(+). It functions in the pathway aminoacyl-tRNA biosynthesis; selenocysteinyl-tRNA(Sec) biosynthesis; L-seryl-tRNA(Sec) from L-serine and tRNA(Sec): step 1/1. Functionally, catalyzes the attachment of serine to tRNA(Ser). Is also able to aminoacylate tRNA(Sec) with serine, to form the misacylated tRNA L-seryl-tRNA(Sec), which will be further converted into selenocysteinyl-tRNA(Sec). This is Serine--tRNA ligase from Aromatoleum aromaticum (strain DSM 19018 / LMG 30748 / EbN1) (Azoarcus sp. (strain EbN1)).